The sequence spans 1201 residues: Putative disease resistance protein At4g19050 (1201 aa).

Residue 33 to 40 (GEAGIGKT) participates in ATP binding. LRR repeat units lie at residues 469–491 (KLRV…SGLQ), 492–514 (GLHV…FFKN), 517–539 (QLQS…EKLS), 540–562 (MLRC…IVET), 680–701 (ELRI…IADV), 703–725 (NLNK…EKLT), 726–748 (HLEV…FGEM), 750–771 (YLHE…ISEL), 773–795 (NLKE…EKLT), 796–818 (NLEI…FENL), 820–841 (CLHK…ISEL), 843–865 (NLKE…EKLT), 866–888 (HLVI…FESM), and 890–911 (YLCE…PKQS). The span at 1162-1180 (DEPRIGARITDEISEDQPH) shows a compositional bias: basic and acidic residues. Positions 1162 to 1201 (DEPRIGARITDEISEDQPHKNTIGPETQTPTQPTKATDTV) are disordered. Polar residues predominate over residues 1185–1201 (GPETQTPTQPTKATDTV).

The protein belongs to the disease resistance NB-LRR family.

Its function is as follows. Potential disease resistance protein. The polypeptide is Putative disease resistance protein At4g19050 (Arabidopsis thaliana (Mouse-ear cress)).